A 424-amino-acid chain; its full sequence is MDSFKVVLEGPAPWGFRLQGGKDFNVPLSISRLTPGGKAAQAGVAVGDWVLSIDGENAGGLTHIEAQNKIRACGERLSLSLSRAQPAQSKPQKVQTPDKQPLRPLVPDASKQRLMEDTEDWRPRPGTGQSRSFRILAHLTGTEFMQDPDEEHLKKSSQVPRTEAPTPASATPQEPWPGPTTPSPTSRPPWAVDPAFAERYAPDKTSTVLTRHTQPATPTPMQNRTSIVQAAAGGGHGGGGGSNGKTPVCHQCHKVIRGRYLVALGRAYHPEEFVCSQCGKVLEEGGFFEEKGAIFCPPCYDVRYAPSCAKCKKKITGEVMHALKTTWHVHCFTCAACKAPIRNRAFYMEEGAPYCEPDYEKMFGTKCRGCDFKIDAGDRFLEALGFSWHDTCFVCAICQINLEGKTFYSKKDKPLCKSHAFSHV.

Residues 1-85 (MDSFKVVLEG…RLSLSLSRAQ (85 aa)) form the PDZ domain. The residue at position 78 (Ser78) is a Phosphoserine. A compositionally biased stretch (polar residues) spans 81–98 (LSRAQPAQSKPQKVQTPD). A disordered region spans residues 81 to 221 (LSRAQPAQSK…HTQPATPTPM (141 aa)). Residue Thr96 is modified to Phosphothreonine. Over residues 110-123 (SKQRLMEDTEDWRP) the composition is skewed to basic and acidic residues. Positions 174 to 187 (EPWPGPTTPSPTSR) are enriched in pro residues. Residues 204–221 (KTSTVLTRHTQPATPTPM) show a composition bias toward polar residues. LIM zinc-binding domains are found at residues 247–305 (PVCH…VRYA), 306–365 (PSCA…MFGT), and 366–424 (KCRG…FSHV).

As to quaternary structure, binds via its LIM zinc-binding 3 domain (LIM 3) domain to endocytic codes of INSR, but not with those of IGF1R, LDLR, TFRC, or EGFR. Interacts with various PKC isoforms through the LIM zinc-binding domains. Binds to RET in a phosphorylation-independent manner via its LIM zinc-binding 2 domain (LIM 2). Probably part of a complex with SHC and the RET dimer. Interacts with TPM2, TBX4 and TBX5.

It is found in the cytoplasm. It localises to the cytoskeleton. In terms of biological role, may function as a scaffold on which the coordinated assembly of proteins can occur. May play a role as an adapter that, via its PDZ domain, localizes LIM-binding proteins to actin filaments of both skeletal muscle and nonmuscle tissues. Involved in both of the two fundamental mechanisms of bone formation, direct bone formation (e.g. embryonic flat bones mandible and cranium), and endochondral bone formation (e.g. embryonic long bone development). Plays a role during fracture repair. Involved in BMP6 signaling pathway. This Bos taurus (Bovine) protein is PDZ and LIM domain protein 7 (PDLIM7).